Here is a 45-residue protein sequence, read N- to C-terminus: Large ribosomal subunit protein bL34c (45 aa).

Polar residues predominate over residues methionine 1–asparagine 10. A disordered region spans residues methionine 1–leucine 45. The segment covering leucine 32–leucine 45 has biased composition (basic residues).

It belongs to the bacterial ribosomal protein bL34 family.

The protein localises to the plastid. It localises to the chloroplast. This is Large ribosomal subunit protein bL34c from Gracilaria tenuistipitata var. liui (Red alga).